A 295-amino-acid polypeptide reads, in one-letter code: Dipeptide transport system permease protein DppC (295 aa).

7 helical membrane-spanning segments follow: residues A27–I47, V97–I117, L132–L152, L156–A178, M202–I222, I226–L246, and W262–G282. The region spanning T93–G282 is the ABC transmembrane type-1 domain.

It belongs to the binding-protein-dependent transport system permease family. OppBC subfamily.

It is found in the cell inner membrane. Its function is as follows. Part of the ABC transporter DppBCDF involved in dipeptide transport. Responsible for the translocation of the substrate across the membrane. The protein is Dipeptide transport system permease protein DppC (dppC) of Haemophilus influenzae (strain ATCC 51907 / DSM 11121 / KW20 / Rd).